The following is a 727-amino-acid chain: Procollagen-lysine,2-oxoglutarate 5-dioxygenase 1 (727 aa).

The first 18 residues, 1 to 18 (MRPLLLLAPLGWLLLAEA), serve as a signal peptide directing secretion. 3 N-linked (GlcNAc...) asparagine glycosylation sites follow: asparagine 163, asparagine 197, and asparagine 538. Positions 636 to 727 (QFDLAFVVRY…RYIAVSFVDP (92 aa)) constitute a Fe2OG dioxygenase domain. 2 residues coordinate Fe cation: histidine 656 and aspartate 658. Residue asparagine 686 is glycosylated (N-linked (GlcNAc...) asparagine). Fe cation is bound at residue histidine 708. Residue arginine 718 is part of the active site.

As to quaternary structure, homodimer. Identified in a complex with P3H3 and P3H4. The cofactor is Fe(2+). Requires L-ascorbate as cofactor.

Its subcellular location is the rough endoplasmic reticulum membrane. The enzyme catalyses L-lysyl-[collagen] + 2-oxoglutarate + O2 = (5R)-5-hydroxy-L-lysyl-[collagen] + succinate + CO2. Functionally, part of a complex composed of PLOD1, P3H3 and P3H4 that catalyzes hydroxylation of lysine residues in collagen alpha chains and is required for normal assembly and cross-linkling of collagen fibrils. Forms hydroxylysine residues in -Xaa-Lys-Gly- sequences in collagens. These hydroxylysines serve as sites of attachment for carbohydrate units and are essential for the stability of the intermolecular collagen cross-links. This chain is Procollagen-lysine,2-oxoglutarate 5-dioxygenase 1 (PLOD1), found in Pongo abelii (Sumatran orangutan).